The following is a 259-amino-acid chain: Small ribosomal subunit protein uS2 (259 aa).

This sequence belongs to the universal ribosomal protein uS2 family.

This chain is Small ribosomal subunit protein uS2, found in Streptococcus pneumoniae (strain 70585).